A 290-amino-acid chain; its full sequence is D-tagatose 3-epimerase (290 aa).

A substrate-binding site is contributed by cysteine 66. Glutamate 152 serves as the catalytic Proton donor/acceptor. Position 152 (glutamate 152) interacts with Mn(2+). Residues glutamate 158 and 185–188 (DTFH) contribute to the substrate site. Residues aspartate 185 and histidine 211 each contribute to the Mn(2+) site. Arginine 217 lines the substrate pocket. The Proton donor/acceptor role is filled by glutamate 246. Position 246 (glutamate 246) interacts with Mn(2+).

This sequence belongs to the hyi family. In terms of assembly, homodimer. It depends on Mn(2+) as a cofactor.

The enzyme catalyses keto-D-tagatose = keto-D-sorbose. The catalysed reaction is D-allulose = keto-D-fructose. It carries out the reaction D-ribulose = D-xylulose. With respect to regulation, strongly inhibited (about 90% of the enzyme activity) by Ag(+), Hg(2+) and p-chloromercuribenzoic acid. Cu(2+) and Zn(2+) inhibit about 60% of the enzyme activity. Functionally, catalyzes the epimerization of various ketoses at the C(3) position. It is able to interconvert D-tagatose and D-ribulose to D-sorbose and D-xylulose, respectively. The enzyme is also able to accept other ketopentoses such as D-psicose with lower efficiency. The sequence is that of D-tagatose 3-epimerase from Pseudomonas cichorii.